The primary structure comprises 267 residues: Large ribosomal subunit protein uL4 (267 aa).

This sequence belongs to the universal ribosomal protein uL4 family. As to quaternary structure, part of the 50S ribosomal subunit.

One of the primary rRNA binding proteins, this protein initially binds near the 5'-end of the 23S rRNA. It is important during the early stages of 50S assembly. It makes multiple contacts with different domains of the 23S rRNA in the assembled 50S subunit and ribosome. Its function is as follows. Forms part of the polypeptide exit tunnel. This Saccharolobus islandicus (strain L.S.2.15 / Lassen #1) (Sulfolobus islandicus) protein is Large ribosomal subunit protein uL4.